The primary structure comprises 29 residues: Potassium channel toxin alpha-KTx 8.3 (29 aa).

3 disulfide bridges follow: Cys-3–Cys-19, Cys-6–Cys-24, and Cys-10–Cys-26.

It belongs to the short scorpion toxin superfamily. Potassium channel inhibitor family. Alpha-KTx 08 subfamily. Expressed by the venom gland.

The protein resides in the secreted. Functionally, specific and potent inhibitor of ClC-2/CLCN2 chloride channel. It slows ClC-2/CLCN2 activation by increasing the latency to first opening by nearly 8-fold but is unable to inhibit open channels, suggesting that this toxin inhibits channel activation gating. This chain is Potassium channel toxin alpha-KTx 8.3, found in Leiurus hebraeus (Hebrew deathstalker scorpion).